The sequence spans 202 residues: Large ribosomal subunit protein bL25 (202 aa).

The protein belongs to the bacterial ribosomal protein bL25 family. CTC subfamily. In terms of assembly, part of the 50S ribosomal subunit; part of the 5S rRNA/L5/L18/L25 subcomplex. Contacts the 5S rRNA. Binds to the 5S rRNA independently of L5 and L18.

In terms of biological role, this is one of the proteins that binds to the 5S RNA in the ribosome where it forms part of the central protuberance. The sequence is that of Large ribosomal subunit protein bL25 from Paramagnetospirillum magneticum (strain ATCC 700264 / AMB-1) (Magnetospirillum magneticum).